The chain runs to 112 residues: Iron-sulfur cluster insertion protein ErpA (112 aa).

Iron-sulfur cluster contacts are provided by C40, C104, and C106.

It belongs to the HesB/IscA family. As to quaternary structure, homodimer. Requires iron-sulfur cluster as cofactor.

Required for insertion of 4Fe-4S clusters for at least IspG. This chain is Iron-sulfur cluster insertion protein ErpA, found in Pseudoalteromonas translucida (strain TAC 125).